The following is a 147-amino-acid chain: Nitric oxide reductase subunit C (147 aa).

Residues 13–29 (VFYGGSLFFIAVFVGLT) form a helical; Signal-anchor membrane-spanning segment. Heme c is bound by residues Cys59, Cys62, and His63.

As to quaternary structure, heterodimer of cytochromes b (large subunit) and c (small subunit).

Its subcellular location is the cell membrane. Its function is as follows. Component of the anaerobic respiratory chain that transforms nitrate to dinitrogen (denitrification). This Cereibacter sphaeroides (strain ATCC 17025 / ATH 2.4.3) (Rhodobacter sphaeroides) protein is Nitric oxide reductase subunit C (norC).